Here is an 84-residue protein sequence, read N- to C-terminus: Hepcidin (84 aa).

A signal peptide spans 1–24; sequence MALSSQIWAACLLLLLLLASLTSG. Positions 25–54 are excised as a propeptide; it reads SVFPQQTGQLAELQPQDRAGARAGWTPMLQ. 3 cysteine pairs are disulfide-bonded: cysteine 69–cysteine 72, cysteine 70–cysteine 78, and cysteine 73–cysteine 81.

This sequence belongs to the hepcidin family. As to quaternary structure, interacts with SLC40A1; this interaction promotes SLC40A1 rapid ubiquitination.

Its subcellular location is the secreted. In terms of biological role, liver-produced hormone that constitutes the main circulating regulator of iron absorption and distribution across tissues. Acts by promoting endocytosis and degradation of ferroportin/SLC40A1, leading to the retention of iron in iron-exporting cells and decreased flow of iron into plasma. Controls the major flows of iron into plasma: absorption of dietary iron in the intestine, recycling of iron by macrophages, which phagocytose old erythrocytes and other cells, and mobilization of stored iron from hepatocytes. Has strong antimicrobial activity against E.coli ML35P N.cinerea and weaker against S.epidermidis, S.aureus and group b streptococcus bacteria. Active against the fungus C.albicans. No activity against P.aeruginosa. The protein is Hepcidin (HAMP) of Pongo abelii (Sumatran orangutan).